Consider the following 779-residue polypeptide: Acyl-CoA dehydrogenase family member 11 (779 aa).

Lys163, Lys166, and Lys175 each carry N6-acetyllysine. Ser210 is subject to Phosphoserine. A Phosphotyrosine modification is found at Tyr323. Lys368 and Lys390 each carry N6-succinyllysine. Residues 503–513 (FCMTEPNVSSS), 511–513 (SSS), 537–539 (WSS), and Ser539 each bind FAD. A substrate-binding site is contributed by Ser513. 628–631 (GPGR) contributes to the substrate binding site. Residues Arg656, Gln726, and 726 to 730 (QVHGG) each bind FAD. Gly754 provides a ligand contact to substrate. Residues 755–757 (PDE) and Glu757 contribute to the FAD site. Position 765 is an N6-acetyllysine (Lys765).

The protein belongs to the acyl-CoA dehydrogenase family. In terms of assembly, homodimer. FAD serves as cofactor.

The protein localises to the peroxisome. The protein resides in the mitochondrion membrane. The catalysed reaction is a 2,3-saturated acyl-CoA + oxidized [electron-transfer flavoprotein] + H(+) = a (2E)-enoyl-CoA + reduced [electron-transfer flavoprotein]. It carries out the reaction docosanoyl-CoA + oxidized [electron-transfer flavoprotein] + H(+) = (2E)-docosenoyl-CoA + reduced [electron-transfer flavoprotein]. The enzyme catalyses tetracosanoyl-CoA + oxidized [electron-transfer flavoprotein] + H(+) = (2E)-tetracosenoyl-CoA + reduced [electron-transfer flavoprotein]. It catalyses the reaction eicosanoyl-CoA + oxidized [electron-transfer flavoprotein] + H(+) = (2E)-eicosenoyl-CoA + reduced [electron-transfer flavoprotein]. The catalysed reaction is hexacosanoyl-CoA + oxidized [electron-transfer flavoprotein] + H(+) = (2E)-hexacosenoyl-CoA + reduced [electron-transfer flavoprotein]. It carries out the reaction tricosanoyl-CoA + oxidized [electron-transfer flavoprotein] + H(+) = (2E)-tricosenoyl-CoA + reduced [electron-transfer flavoprotein]. It functions in the pathway lipid metabolism; fatty acid beta-oxidation. In terms of biological role, acyl-CoA dehydrogenase, that exhibits maximal activity towards saturated C22-CoA. Probably participates in beta-oxydation and energy production but could also play a role in the metabolism of specific fatty acids to control fatty acids composition of cellular lipids in brain. This Mus musculus (Mouse) protein is Acyl-CoA dehydrogenase family member 11 (Acad11).